The sequence spans 128 residues: Sulfurtransferase TusD (128 aa).

Catalysis depends on cysteine 78, which acts as the Cysteine persulfide intermediate.

The protein belongs to the DsrE/TusD family. Heterohexamer, formed by a dimer of trimers. The hexameric TusBCD complex contains 2 copies each of TusB, TusC and TusD. The TusBCD complex interacts with TusE.

The protein localises to the cytoplasm. Functionally, part of a sulfur-relay system required for 2-thiolation of 5-methylaminomethyl-2-thiouridine (mnm(5)s(2)U) at tRNA wobble positions. Accepts sulfur from TusA and transfers it in turn to TusE. The sequence is that of Sulfurtransferase TusD from Shigella flexneri serotype 5b (strain 8401).